A 34-amino-acid polypeptide reads, in one-letter code: Ornithine carbamoyltransferase, catabolic (34 aa).

The protein belongs to the aspartate/ornithine carbamoyltransferase superfamily. OTCase family. In terms of assembly, probably nonameric or dodecameric.

The protein localises to the cytoplasm. It carries out the reaction carbamoyl phosphate + L-ornithine = L-citrulline + phosphate + H(+). The protein operates within amino-acid degradation; L-arginine degradation via ADI pathway; carbamoyl phosphate from L-arginine: step 2/2. The chain is Ornithine carbamoyltransferase, catabolic (arcB) from Pseudomonas putida (Arthrobacter siderocapsulatus).